The chain runs to 301 residues: Probable alpha-L-glutamate ligase (301 aa).

One can recognise an ATP-grasp domain in the interval 104-287 (LQLLARKGIG…VAGQLIDYIE (184 aa)). Residues K141, 178-179 (EF), D187, and 211-213 (RSN) contribute to the ATP site. Mg(2+) contacts are provided by D248, E260, and N262. Mn(2+)-binding residues include D248, E260, and N262.

The protein belongs to the RimK family. Requires Mg(2+) as cofactor. Mn(2+) is required as a cofactor.

The sequence is that of Probable alpha-L-glutamate ligase from Maridesulfovibrio salexigens (strain ATCC 14822 / DSM 2638 / NCIMB 8403 / VKM B-1763) (Desulfovibrio salexigens).